Here is a 176-residue protein sequence, read N- to C-terminus: 3-hydroxyanthranilate 3,4-dioxygenase (176 aa).

Position 44 (arginine 44) interacts with O2. Residues histidine 48, glutamate 54, and histidine 92 each coordinate Fe cation. Glutamate 54 lines the substrate pocket. The substrate site is built by arginine 96 and glutamate 106. The Fe cation site is built by cysteine 121, cysteine 124, cysteine 158, and cysteine 161.

The protein belongs to the 3-HAO family. As to quaternary structure, homodimer. Fe(2+) is required as a cofactor.

It carries out the reaction 3-hydroxyanthranilate + O2 = (2Z,4Z)-2-amino-3-carboxymuconate 6-semialdehyde. Its pathway is cofactor biosynthesis; NAD(+) biosynthesis; quinolinate from L-kynurenine: step 3/3. Catalyzes the oxidative ring opening of 3-hydroxyanthranilate to 2-amino-3-carboxymuconate semialdehyde, which spontaneously cyclizes to quinolinate. The sequence is that of 3-hydroxyanthranilate 3,4-dioxygenase from Xanthomonas campestris pv. campestris (strain 8004).